We begin with the raw amino-acid sequence, 532 residues long: Exopolysaccharide phosphotransferase CpsY (532 aa).

It belongs to the stealth family.

The protein is Exopolysaccharide phosphotransferase CpsY (cpsY) of Mycobacterium bovis (strain ATCC BAA-935 / AF2122/97).